We begin with the raw amino-acid sequence, 78 residues long: U-scoloptoxin(13)-Er1a (78 aa).

The signal sequence occupies residues 1-24 (MFPSWSTTFVLCMGLCSLMNGALA).

Belongs to the scoloptoxin-13 family. Contains 4 disulfide bonds. As to expression, expressed by the venom gland.

It localises to the secreted. In Ethmostigmus rubripes (Giant centipede), this protein is U-scoloptoxin(13)-Er1a.